The following is a 242-amino-acid chain: Cysteine desulfuration protein SufE (242 aa).

Cys148 acts as the Cysteine persulfide intermediate in catalysis.

This sequence belongs to the SufE family. In terms of assembly, monomer. Interacts with SufS; interaction enhances cysteine desulfurase activity of SufS.

The protein localises to the plastid. The protein resides in the apicoplast. The protein operates within cofactor biosynthesis; iron-sulfur cluster biosynthesis. Its function is as follows. Participates in sulfur mobilization (SUF) pathway for iron-sulfur (Fe-S) cluster biogenesis. Enhances cysteine desulfurase activity of SufS. Probably functions as a sulfur acceptor for SufS. This chain is Cysteine desulfuration protein SufE, found in Plasmodium vivax.